Here is a 308-residue protein sequence, read N- to C-terminus: MQLLFALLALGALRPLAGEELHWCYEIQASNYSCLGPDKWQEDCQKSRQSPINIVTTKAEVDHSLGRFHFSGYDQREARLVENNGHSVMVSLGDEISISGGGLPARYRATQLHLHWSQELDRGSEHSLDGERSAMEMHIVHQKETGTSGNEVQDSDDSIAVLAFLVEAGPTMNEGFQPLVTALSAISIPGTNTTMAPSSLWDLLPAEEELRHYFRYMGSLTTPACSETVVWTVFQEPIRLHRDQILEFSSKLYYDQERKMNMKDNVRPLQRLGDRSVFKSQAAGQLLPLPLPTLLVPTLACVMAGLLR.

Residues 1 to 18 (MQLLFALLALGALRPLAG) form the signal peptide. Positions 21-281 (LHWCYEIQAS…LGDRSVFKSQ (261 aa)) constitute an Alpha-carbonic anhydrase domain. Disulfide bonds link C24-C34 and C44-C225. N31 carries an N-linked (GlcNAc...) asparagine glycan. The Proton donor/acceptor role is filled by H86. Residues H113, H115, and H138 each contribute to the Zn(2+) site. N192 carries an N-linked (GlcNAc...) asparagine glycan. Residue 221 to 222 (TT) participates in substrate binding. S280 carries the GPI-anchor amidated serine lipid modification. Positions 281 to 308 (QAAGQLLPLPLPTLLVPTLACVMAGLLR) are cleaved as a propeptide — removed in mature form.

The protein belongs to the alpha-carbonic anhydrase family. Interacts with SLC4A4. The cofactor is Zn(2+).

The protein resides in the cell membrane. It catalyses the reaction hydrogencarbonate + H(+) = CO2 + H2O. Inhibited by acetazolamide. Catalyzes the reversible hydration of carbon dioxide into bicarbonate and protons and thus is essential to maintaining intracellular and extracellular pH. May stimulate the sodium/bicarbonate transporter activity of SLC4A4 that acts in pH homeostasis. It is essential for acid overload removal from the retina and retina epithelium, and acid release in the choriocapillaris in the choroid. The sequence is that of Carbonic anhydrase 4 (CA4) from Oryctolagus cuniculus (Rabbit).